We begin with the raw amino-acid sequence, 383 residues long: Acetylornithine deacetylase (383 aa).

Histidine 80 is a Zn(2+) binding site. Aspartate 82 is a catalytic residue. Aspartate 112 lines the Zn(2+) pocket. Glutamate 144 is an active-site residue. Glutamate 145, glutamate 169, and histidine 355 together coordinate Zn(2+).

The protein belongs to the peptidase M20A family. ArgE subfamily. In terms of assembly, homodimer. Zn(2+) is required as a cofactor. The cofactor is Co(2+). Glutathione serves as cofactor.

Its subcellular location is the cytoplasm. It carries out the reaction N(2)-acetyl-L-ornithine + H2O = L-ornithine + acetate. It functions in the pathway amino-acid biosynthesis; L-arginine biosynthesis; L-ornithine from N(2)-acetyl-L-ornithine (linear): step 1/1. Functionally, catalyzes the hydrolysis of the amide bond of N(2)-acetylated L-amino acids. Cleaves the acetyl group from N-acetyl-L-ornithine to form L-ornithine, an intermediate in L-arginine biosynthesis pathway, and a branchpoint in the synthesis of polyamines. The protein is Acetylornithine deacetylase of Erwinia tasmaniensis (strain DSM 17950 / CFBP 7177 / CIP 109463 / NCPPB 4357 / Et1/99).